Here is a 325-residue protein sequence, read N- to C-terminus: Heat-inducible transcription repressor HrcA (325 aa).

It belongs to the HrcA family.

Functionally, negative regulator of class I heat shock genes (grpE-dnaK-dnaJ and groELS operons). Prevents heat-shock induction of these operons. In Staphylococcus aureus (strain JH1), this protein is Heat-inducible transcription repressor HrcA.